The following is an 803-amino-acid chain: Leucine--tRNA ligase (803 aa).

Positions Pro40–His51 match the 'HIGH' region motif. The 'KMSKS' region signature appears at Lys575 to Ser579. Residue Lys578 participates in ATP binding.

The protein belongs to the class-I aminoacyl-tRNA synthetase family.

Its subcellular location is the cytoplasm. The catalysed reaction is tRNA(Leu) + L-leucine + ATP = L-leucyl-tRNA(Leu) + AMP + diphosphate. This Lacticaseibacillus paracasei (strain ATCC 334 / BCRC 17002 / CCUG 31169 / CIP 107868 / KCTC 3260 / NRRL B-441) (Lactobacillus paracasei) protein is Leucine--tRNA ligase.